We begin with the raw amino-acid sequence, 272 residues long: MLELLQAVLLGAVQGLTEFLPVSSSGHLLLGQYFLGLDQDRFGLSFDVALHLGTLVAVVVFFRRDLLRMAGAFVRSLTRGRDLSEPDQRLAYLVLAATVPAALIGYLWEDFFETAVRSPWVVVFNLAFVGLLFLVAEAVGRKSRRAEKMGFAEAVGIGLAQAAALVPGVSRSGATITLGLLFGLRREEAARFSFLMSAPIIAGAGTLQLGEVLAEGMGAEQALMFAVGFLCSAVVGYLAIRFFISFVARYSLRAFAYYRFALAALVAALLLL.

7 consecutive transmembrane segments (helical) span residues 42 to 62, 92 to 112, 120 to 140, 149 to 169, 194 to 214, 224 to 244, and 252 to 272; these read FGLSFDVALHLGTLVAVVVFF, YLVLAATVPAALIGYLWEDFF, WVVVFNLAFVGLLFLVAEAVG, MGFAEAVGIGLAQAAALVPGV, FLMSAPIIAGAGTLQLGEVLA, MFAVGFLCSAVVGYLAIRFFI, and LRAFAYYRFALAALVAALLLL.

It belongs to the UppP family.

It is found in the cell membrane. It catalyses the reaction di-trans,octa-cis-undecaprenyl diphosphate + H2O = di-trans,octa-cis-undecaprenyl phosphate + phosphate + H(+). Its function is as follows. Catalyzes the dephosphorylation of undecaprenyl diphosphate (UPP). Confers resistance to bacitracin. This Rubrobacter xylanophilus (strain DSM 9941 / JCM 11954 / NBRC 16129 / PRD-1) protein is Undecaprenyl-diphosphatase.